Consider the following 225-residue polypeptide: MSTWMMFMFQESNSFYADNLVSFHNLVMMIIIMISTLTIYIIFDLFMNKFSNLFLLKNHNIEIIWTIVPIVILLIICFPSLKILYLIDEIINPFFSIKSIGHQWYWSYEYPEFNNIEFDSYMLNYSNLNQFRLLETDNRMIIPMKIPMRLITTSTDVIHSWTVPSLGIKVDAVPGRINQLNLISKRPGIFFGQCSEICGMNHSFMPIMVESTSFKFFLNWINKQN.

Residues 1 to 25 lie on the Mitochondrial intermembrane side of the membrane; it reads MSTWMMFMFQESNSFYADNLVSFHN. The chain crosses the membrane as a helical span at residues 26–47; the sequence is LVMMIIIMISTLTIYIIFDLFM. Residues 48–62 lie on the Mitochondrial matrix side of the membrane; it reads NKFSNLFLLKNHNIE. A helical membrane pass occupies residues 63-82; the sequence is IIWTIVPIVILLIICFPSLK. Residues 83-225 lie on the Mitochondrial intermembrane side of the membrane; the sequence is ILYLIDEIIN…FFLNWINKQN (143 aa). Cu cation-binding residues include H159, C194, E196, C198, H202, and M205. E196 contacts Mg(2+).

This sequence belongs to the cytochrome c oxidase subunit 2 family. Component of the cytochrome c oxidase (complex IV, CIV), a multisubunit enzyme composed of a catalytic core of 3 subunits and several supernumerary subunits. The complex exists as a monomer or a dimer and forms supercomplexes (SCs) in the inner mitochondrial membrane with ubiquinol-cytochrome c oxidoreductase (cytochrome b-c1 complex, complex III, CIII). It depends on Cu cation as a cofactor.

The protein resides in the mitochondrion inner membrane. The catalysed reaction is 4 Fe(II)-[cytochrome c] + O2 + 8 H(+)(in) = 4 Fe(III)-[cytochrome c] + 2 H2O + 4 H(+)(out). Its function is as follows. Component of the cytochrome c oxidase, the last enzyme in the mitochondrial electron transport chain which drives oxidative phosphorylation. The respiratory chain contains 3 multisubunit complexes succinate dehydrogenase (complex II, CII), ubiquinol-cytochrome c oxidoreductase (cytochrome b-c1 complex, complex III, CIII) and cytochrome c oxidase (complex IV, CIV), that cooperate to transfer electrons derived from NADH and succinate to molecular oxygen, creating an electrochemical gradient over the inner membrane that drives transmembrane transport and the ATP synthase. Cytochrome c oxidase is the component of the respiratory chain that catalyzes the reduction of oxygen to water. Electrons originating from reduced cytochrome c in the intermembrane space (IMS) are transferred via the dinuclear copper A center (CU(A)) of subunit 2 and heme A of subunit 1 to the active site in subunit 1, a binuclear center (BNC) formed by heme A3 and copper B (CU(B)). The BNC reduces molecular oxygen to 2 water molecules using 4 electrons from cytochrome c in the IMS and 4 protons from the mitochondrial matrix. The polypeptide is Cytochrome c oxidase subunit 2 (COII) (Apis koschevnikovi (Koschevnikov's honey bee)).